The chain runs to 408 residues: Protein EcsB (408 aa).

Helical transmembrane passes span 30–50 (HLVI…SKWI), 53–73 (IPAH…VLTS), 111–131 (LFPL…VTPG), 134–154 (LVSY…NQVM), 180–200 (LVLY…YVIM), 284–304 (YLGI…YVSA), 308–328 (IAAV…LPLF), 351–371 (YFSL…VASA), and 374–394 (AGLT…FVVL).

The protein localises to the cell membrane. In terms of biological role, presumed to form part of an ABC-transporter, it may form a transport channel. In Bacillus subtilis (strain 168), this protein is Protein EcsB (ecsB).